The following is an 88-amino-acid chain: Kunitz-type U15-theraphotoxin-Hhn1k (88 aa).

An N-terminal signal peptide occupies residues 1–27 (MGTARFLRAVLLLSVLLMVTFPALLSA). Residues 28–33 (EHHDGR) constitute a propeptide that is removed on maturation. In terms of domain architecture, BPTI/Kunitz inhibitor spans 37-85 (CRLPSDSGDCLRFFEMWCFDGTTCTKFVYGGYGGNDNRFPTEKACMKRC). Cystine bridges form between cysteine 37–cysteine 85 and cysteine 60–cysteine 81.

This sequence belongs to the venom Kunitz-type family. 03 (sub-Kunitz) subfamily. As to expression, expressed by the venom gland.

The protein resides in the secreted. Functionally, serine protease inhibitor that inhibits trypsin at a molar ratio of 1:1. This chain is Kunitz-type U15-theraphotoxin-Hhn1k, found in Cyriopagopus hainanus (Chinese bird spider).